A 55-amino-acid chain; its full sequence is Ovomucoid (55 aa).

Residues 5–55 (VDCSEHPKPACTLDYRPICGSDSKTYSNKCDFCNAVMDSNGTLTLSHFGKC) enclose the Kazal-like domain. Cystine bridges form between Cys7–Cys37, Cys15–Cys34, and Cys23–Cys55. Asn44 carries N-linked (GlcNAc...) asparagine glycosylation.

The protein resides in the secreted. The chain is Ovomucoid from Dacelo novaeguineae (Laughing kookaburra).